Here is a 599-residue protein sequence, read N- to C-terminus: Putative sensor histidine kinase NtrY-like (599 aa).

Transmembrane regions (helical) follow at residues 17 to 37, 44 to 64, 85 to 105, and 285 to 305; these read ILIL…FYVI, FSTI…LGIL, IVIA…VFSV, and IMFI…GVLF. The 55-residue stretch at 307–361 folds into the HAMP domain; the sequence is AKIVKPIKKLVTATDKVKDGDLTVQVPENEVDKDEIGTLYAAFNRMIKQLSRQQR. The 212-residue stretch at 378–589 folds into the Histidine kinase domain; it reads KVAHEIKNPL…IIDIKFDLKE (212 aa). At His-381 the chain carries Phosphohistidine; by autocatalysis.

The protein resides in the cell membrane. The catalysed reaction is ATP + protein L-histidine = ADP + protein N-phospho-L-histidine.. Functionally, member of the two-component regulatory system RP614/RP562. This is Putative sensor histidine kinase NtrY-like from Rickettsia prowazekii (strain Madrid E).